The primary structure comprises 251 residues: Probable transcriptional regulatory protein Amuc_0709 (251 aa).

Belongs to the TACO1 family.

The protein localises to the cytoplasm. This chain is Probable transcriptional regulatory protein Amuc_0709, found in Akkermansia muciniphila (strain ATCC BAA-835 / DSM 22959 / JCM 33894 / BCRC 81048 / CCUG 64013 / CIP 107961 / Muc).